A 652-amino-acid chain; its full sequence is Acetyl-coenzyme A synthetase (652 aa).

Residues 191–194 (RAGR), Thr311, and Asn335 contribute to the CoA site. ATP-binding positions include 387 to 389 (GEP), 411 to 416 (DTWWQT), Asp500, and Arg515. Residue Ser523 participates in CoA binding. Arg526 contributes to the ATP binding site. The Mg(2+) site is built by Val537, His539, and Ile542. Residue Arg584 coordinates CoA. At Lys609 the chain carries N6-acetyllysine; by autocatalysis.

The protein belongs to the ATP-dependent AMP-binding enzyme family. Forms a 1:1 complex with CobB/NAD-dependent deacetylase. Mg(2+) is required as a cofactor. Post-translationally, autoacetylated. Deacetylation by CobB activates the enzyme.

The catalysed reaction is acetate + ATP + CoA = acetyl-CoA + AMP + diphosphate. In terms of biological role, catalyzes the conversion of acetate into acetyl-CoA (AcCoA), an essential intermediate at the junction of anabolic and catabolic pathways. Acs undergoes a two-step reaction. In the first half reaction, Acs combines acetate with ATP to form acetyl-adenylate (AcAMP) intermediate. In the second half reaction, it can then transfer the acetyl group from AcAMP to the sulfhydryl group of CoA, forming the product AcCoA. Its function is as follows. Enables the cell to use acetate during aerobic growth to generate energy via the TCA cycle, and biosynthetic compounds via the glyoxylate shunt. Acetylates CheY, the response regulator involved in flagellar movement and chemotaxis. The sequence is that of Acetyl-coenzyme A synthetase from Escherichia coli (strain K12).